The following is a 155-amino-acid chain: Small ribosomal subunit protein uS7c (155 aa).

The protein belongs to the universal ribosomal protein uS7 family. Part of the 30S ribosomal subunit.

The protein resides in the plastid. It localises to the chloroplast. Its function is as follows. One of the primary rRNA binding proteins, it binds directly to 16S rRNA where it nucleates assembly of the head domain of the 30S subunit. This Ananas comosus (Pineapple) protein is Small ribosomal subunit protein uS7c (rps7).